We begin with the raw amino-acid sequence, 162 residues long: Caveolin-2 (162 aa).

Topologically, residues 1 to 86 (MGLETEKADV…FEMSKYVIYK (86 aa)) are cytoplasmic. Tyr-19 carries the phosphotyrosine; by SRC modification. 2 positions are modified to phosphoserine: Ser-20 and Ser-23. Residue Tyr-27 is modified to Phosphotyrosine; by SRC. Positions 87 to 107 (FLTVFLAIPLAFAAGILFATL) form an intramembrane region, helical. Over 108–162 (SCLHIWIIMPFVKTCLMVLPSVQTIWKSVTDVVIAPLCTSVGRSFSSVSLQLSHD) the chain is Cytoplasmic.

Belongs to the caveolin family. Monomer or homodimer. Interacts with CAV1; the interaction forms a stable heterooligomeric complex that is required for targeting to lipid rafts and for caveolae formation. Tyrosine phosphorylated forms do not form heterooligomers with the Tyr-19-phosphorylated form existing as a monomer or dimer, and the Tyr-27-form as a monomer only. Interacts (tyrosine phosphorylated form) with the SH2 domain-containing proteins, RASA1, NCK1 and SRC. Interacts (tyrosine phosphorylated form) with INSR, the interaction (Tyr-27-phosphorylated form) is increased on insulin stimulation. Interacts (Tyr-19 phosphorylated form) with MAPK1 (phosphorylated form); the interaction, promoted by insulin, leads to nuclear location and MAPK1 activation. Interacts with STAT3; the interaction is increased on insulin-induced tyrosine phosphorylation leading to STAT activation. In terms of processing, phosphorylated on serine and tyrosine residues. CAV1 promotes phosphorylation on Ser-23 which then targets the complex to the plasma membrane, lipid rafts and caveolae. Phosphorylation on both Tyr-19 and Tyr-27 is required for insulin-induced 'Ser-727' phosphorylation of STAT3 and its activation. Phosphorylation on Tyr-19 is required for insulin-induced phosphorylation of MAPK1 and DNA binding of STAT3. Tyrosine phosphorylation is induced by both EGF and insulin.

Its subcellular location is the nucleus. It is found in the cytoplasm. It localises to the golgi apparatus membrane. The protein resides in the cell membrane. The protein localises to the membrane. Its subcellular location is the caveola. May act as a scaffolding protein within caveolar membranes. Interacts directly with G-protein alpha subunits and can functionally regulate their activity. Acts as an accessory protein in conjunction with CAV1 in targeting to lipid rafts and driving caveolae formation. Positive regulator of cellular mitogenesis of the MAPK signaling pathway. Required for the insulin-stimulated nuclear translocation and activation of MAPK1 and STAT3, and the subsequent regulation of cell cycle progression. The chain is Caveolin-2 (CAV2) from Muntiacus muntjak (Barking deer).